Here is a 215-residue protein sequence, read N- to C-terminus: Outer-membrane lipoprotein LolB (215 aa).

A signal peptide spans 1-21 (MLIPKKYYLLIILLSNCLLAS). Residue C22 is the site of N-palmitoyl cysteine attachment. C22 carries S-diacylglycerol cysteine lipidation.

Belongs to the LolB family. In terms of assembly, monomer.

It is found in the cell outer membrane. Plays a critical role in the incorporation of lipoproteins in the outer membrane after they are released by the LolA protein. The chain is Outer-membrane lipoprotein LolB from Baumannia cicadellinicola subsp. Homalodisca coagulata.